Reading from the N-terminus, the 327-residue chain is MVLLSKPTSEQYTYVRNNMPITFSSSIPLVDLSKPDAKTLIVKACEDFGFFKVINHGIPLDAISQLESEAFKFFSLPQTEKEKAGPANPFGYGNKRIGLNGDIGWIEYLLLTTNQDHNFSLYGEDIDKFRGLLKDYKCAMRNMACEILDLMAEGLKIQPKNVFSKLVMDKQSDCLFRVNHYPACPELAINGENLIGFGEHTDPQIISILRSNNTSGFQISLRDGSWISVPPDHSSFFINVGDSLQVMTNGRFKSVRHRVLANGIDPRLSMIYFCGPPLSEKIAPLPSLMKGKESLYKEFTWFEYKSSTYGSRLADNRLGNYERIAAT.

The 106-residue stretch at 171–276 (QSDCLFRVNH…RLSMIYFCGP (106 aa)) folds into the Fe2OG dioxygenase domain. Fe cation contacts are provided by His200, Asp202, and His257. Arg267 is a catalytic residue.

This sequence belongs to the iron/ascorbate-dependent oxidoreductase family. GA2OX subfamily. Requires Fe cation as cofactor. Predominantly expressed in roots, flowers, young fruits and seeds.

The enzyme catalyses gibberellin A1 + 2-oxoglutarate + O2 = gibberellin A8 + succinate + CO2. The protein operates within plant hormone biosynthesis; gibberellin biosynthesis. Catalyzes the 2-beta-hydroxylation of several biologically active gibberellins, leading to the homeostatic regulation of their endogenous level. Catabolism of gibberellins (GAs) plays a central role in plant development. Converts GA9/GA20 to GA51/GA29 and GA4/GA1 to GA34/GA8. In Pisum sativum (Garden pea), this protein is Gibberellin 2-beta-dioxygenase 1 (GA2OX1).